A 431-amino-acid chain; its full sequence is Glutamate--tRNA ligase 1 (431 aa).

Residues 6–16 (PSPTGDMHIGN) carry the 'HIGH' region motif. The 'KMSKS' region signature appears at 235–239 (KMSKR). Lysine 238 is an ATP binding site.

Belongs to the class-I aminoacyl-tRNA synthetase family. Glutamate--tRNA ligase type 1 subfamily. Monomer.

The protein localises to the cytoplasm. It carries out the reaction tRNA(Glu) + L-glutamate + ATP = L-glutamyl-tRNA(Glu) + AMP + diphosphate. Functionally, catalyzes the attachment of glutamate to tRNA(Glu) in a two-step reaction: glutamate is first activated by ATP to form Glu-AMP and then transferred to the acceptor end of tRNA(Glu). The chain is Glutamate--tRNA ligase 1 from Campylobacter concisus (strain 13826).